The chain runs to 184 residues: Gremlin-1 (184 aa).

The N-terminal stretch at 1–24 is a signal peptide; it reads MSRTAYTVGALLLLLGTLLPAAEG. The segment at 24 to 77 is disordered; it reads GKKKGSQGAIPPPDKAQHNDSEQTQSPQQPGSRNRGRGQGRGTAMPGEEVLESS. N42 is a glycosylation site (N-linked (GlcNAc...) asparagine). 4 disulfide bridges follow: C94–C144, C108–C158, C118–C176, and C122–C178. Residues 94-184 form the CTCK domain; the sequence is CKTQPLKQTI…QCRCISIDLD (91 aa).

The protein belongs to the DAN family. In terms of assembly, homodimer; can also form homooligomers. Interacts with BMP2; can form higher oligomers with BMP2. Interacts with SLIT1 and SLIT2 in a glycosylation-dependent manner. As to expression, highly expressed in small intestine, fetal brain and colon. Expression is restricted to intestinal subepithelial myofibroblasts (ISEMFs) at the crypt base. In subjects with HMPS1, by contrast, GREM1 is expressed, not only in basal ISEMFs, but also at very high levels in epithelial cells (predominantly colonocytes), with expression extending most of the way up the sides of the crypt. Weakly expressed in brain, ovary, prostate, pancreas and skeletal muscle. In brain found in the region localized around the internal capsule in the large subcortical nuclei, including caudate, putamen, substantia nigra, thalamus and subthalamus. Predominantly expressed in normal cells including neurons, astrocytes and fibroblasts.

It is found in the secreted. Functionally, cytokine that may play an important role during carcinogenesis and metanephric kidney organogenesis, as a BMP antagonist required for early limb outgrowth and patterning in maintaining the FGF4-SHH feedback loop. Down-regulates the BMP4 signaling in a dose-dependent manner. Antagonist of BMP2; inhibits BMP2-mediated differentiation of osteoblasts (in vitro). Acts as inhibitor of monocyte chemotaxis. Can inhibit the growth or viability of normal cells but not transformed cells when is overexpressed. The polypeptide is Gremlin-1 (GREM1) (Homo sapiens (Human)).